Consider the following 437-residue polypeptide: Serine carboxypeptidase-like 9 (437 aa).

An N-terminal signal peptide occupies residues 1–21; that stretch reads MSLILKFMLLILLVSSHHVRS. Asn-101 carries N-linked (GlcNAc...) asparagine glycosylation. Ser-175 is a catalytic residue. Disulfide bonds link Cys-243–Cys-257 and Cys-281–Cys-293. 2 N-linked (GlcNAc...) asparagine glycosylation sites follow: Asn-307 and Asn-346. Asp-362 is a catalytic residue. An N-linked (GlcNAc...) asparagine glycan is attached at Asn-378. His-415 is a catalytic residue.

This sequence belongs to the peptidase S10 family. As to expression, expressed in seedlings, leaves, flowers and siliques.

It localises to the secreted. It carries out the reaction 2 1-O-(trans-sinapoyl)-beta-D-glucose = 1,2-di-O-sinapoyl beta-D-glucose + D-glucose. Catalyzes the formation of 1,2-bis-O-sinapoyl beta-D-glucoside and an unidentified compound 1. In Arabidopsis thaliana (Mouse-ear cress), this protein is Serine carboxypeptidase-like 9 (SCPL9).